An 82-amino-acid chain; its full sequence is ATP synthase subunit c, chloroplastic (82 aa).

The next 2 helical transmembrane spans lie at 3 to 23 (PIIS…AAIG) and 57 to 77 (LAFM…LLFA).

The protein belongs to the ATPase C chain family. As to quaternary structure, F-type ATPases have 2 components, F(1) - the catalytic core - and F(0) - the membrane proton channel. F(1) has five subunits: alpha(3), beta(3), gamma(1), delta(1), epsilon(1). F(0) has four main subunits: a(1), b(1), b'(1) and c(10-14). The alpha and beta chains form an alternating ring which encloses part of the gamma chain. F(1) is attached to F(0) by a central stalk formed by the gamma and epsilon chains, while a peripheral stalk is formed by the delta, b and b' chains.

It is found in the plastid. The protein resides in the chloroplast thylakoid membrane. Its function is as follows. F(1)F(0) ATP synthase produces ATP from ADP in the presence of a proton or sodium gradient. F-type ATPases consist of two structural domains, F(1) containing the extramembraneous catalytic core and F(0) containing the membrane proton channel, linked together by a central stalk and a peripheral stalk. During catalysis, ATP synthesis in the catalytic domain of F(1) is coupled via a rotary mechanism of the central stalk subunits to proton translocation. In terms of biological role, key component of the F(0) channel; it plays a direct role in translocation across the membrane. A homomeric c-ring of between 10-14 subunits forms the central stalk rotor element with the F(1) delta and epsilon subunits. In Cyanidium caldarium (Red alga), this protein is ATP synthase subunit c, chloroplastic.